The sequence spans 505 residues: Flagellin (505 aa).

This sequence belongs to the bacterial flagellin family.

The protein resides in the secreted. The protein localises to the bacterial flagellum. Flagellin is the subunit protein which polymerizes to form the filaments of bacterial flagella. This is Flagellin (fliC) from Salmonella derby.